The chain runs to 161 residues: Protein-export protein SecB (161 aa).

This sequence belongs to the SecB family. As to quaternary structure, homotetramer, a dimer of dimers. One homotetramer interacts with 1 SecA dimer.

The protein localises to the cytoplasm. Its function is as follows. One of the proteins required for the normal export of preproteins out of the cell cytoplasm. It is a molecular chaperone that binds to a subset of precursor proteins, maintaining them in a translocation-competent state. It also specifically binds to its receptor SecA. The chain is Protein-export protein SecB from Shewanella sp. (strain ANA-3).